The primary structure comprises 81 residues: ATP synthase subunit c, chloroplastic (81 aa).

2 helical membrane passes run 7–27 (AASV…PGIG) and 57–77 (LAFM…LLFA).

Belongs to the ATPase C chain family. F-type ATPases have 2 components, F(1) - the catalytic core - and F(0) - the membrane proton channel. F(1) has five subunits: alpha(3), beta(3), gamma(1), delta(1), epsilon(1). F(0) has four main subunits: a(1), b(1), b'(1) and c(10-14). The alpha and beta chains form an alternating ring which encloses part of the gamma chain. F(1) is attached to F(0) by a central stalk formed by the gamma and epsilon chains, while a peripheral stalk is formed by the delta, b and b' chains.

The protein resides in the plastid. The protein localises to the chloroplast thylakoid membrane. F(1)F(0) ATP synthase produces ATP from ADP in the presence of a proton or sodium gradient. F-type ATPases consist of two structural domains, F(1) containing the extramembraneous catalytic core and F(0) containing the membrane proton channel, linked together by a central stalk and a peripheral stalk. During catalysis, ATP synthesis in the catalytic domain of F(1) is coupled via a rotary mechanism of the central stalk subunits to proton translocation. In terms of biological role, key component of the F(0) channel; it plays a direct role in translocation across the membrane. A homomeric c-ring of between 10-14 subunits forms the central stalk rotor element with the F(1) delta and epsilon subunits. This chain is ATP synthase subunit c, chloroplastic, found in Staurastrum punctulatum (Green alga).